The primary structure comprises 969 residues: Alpha-glucosidase (969 aa).

The signal sequence occupies residues 1 to 24 (MMISTAYQSLFLTALFSAISIAVG). Asparagine 37, asparagine 67, asparagine 99, asparagine 116, asparagine 139, asparagine 146, asparagine 209, asparagine 245, asparagine 249, asparagine 331, asparagine 406, asparagine 429, asparagine 462, and asparagine 470 each carry an N-linked (GlcNAc...) asparagine glycan. Aspartate 481 serves as the catalytic Nucleophile. The active site involves glutamate 484. Residues asparagine 520, asparagine 523, and asparagine 589 are each glycosylated (N-linked (GlcNAc...) asparagine). Aspartate 647 (proton donor) is an active-site residue. N-linked (GlcNAc...) asparagine glycosylation is found at asparagine 648, asparagine 801, asparagine 810, asparagine 821, asparagine 885, asparagine 915, asparagine 934, asparagine 942, asparagine 954, and asparagine 966.

This sequence belongs to the glycosyl hydrolase 31 family.

The protein localises to the secreted. The catalysed reaction is Hydrolysis of terminal, non-reducing (1-&gt;4)-linked alpha-D-glucose residues with release of alpha-D-glucose.. Functionally, hydrolyzes malto-oligosaccharides, but has a low activity toward soluble starch. This is Alpha-glucosidase (agl1) from Schizosaccharomyces pombe (strain 972 / ATCC 24843) (Fission yeast).